The primary structure comprises 507 residues: RNA-splicing ligase RtcB homolog (507 aa).

Asp121, Cys124, His229, His261, and His355 together coordinate Mn(2+). Residue 228–232 (NHYAE) coordinates GMP. GMP is bound by residues 355–356 (HN), 404–407 (GGTM), Ser411, 430–433 (HGAG), and Lys506. Catalysis depends on His430, which acts as the GMP-histidine intermediate.

It belongs to the RtcB family. In terms of assembly, catalytic component of the tRNA-splicing ligase complex. Mn(2+) serves as cofactor.

It catalyses the reaction a 3'-end 3'-phospho-ribonucleotide-RNA + a 5'-end dephospho-ribonucleoside-RNA + GTP = a ribonucleotidyl-ribonucleotide-RNA + GMP + diphosphate. It carries out the reaction a 3'-end 2',3'-cyclophospho-ribonucleotide-RNA + a 5'-end dephospho-ribonucleoside-RNA + GTP + H2O = a ribonucleotidyl-ribonucleotide-RNA + GMP + diphosphate + H(+). Functionally, catalytic subunit of the tRNA-splicing ligase complex that acts by directly joining spliced tRNA halves to mature-sized tRNAs by incorporating the precursor-derived splice junction phosphate into the mature tRNA as a canonical 3',5'-phosphodiester. May act as an RNA ligase with broad substrate specificity, and may function toward other RNAs. This Branchiostoma floridae (Florida lancelet) protein is RNA-splicing ligase RtcB homolog.